Reading from the N-terminus, the 227-residue chain is Phosphoribosylformylglycinamidine synthase subunit PurQ (227 aa).

One can recognise a Glutamine amidotransferase type-1 domain in the interval 3–225 (FAVIVFPGSN…LRNWRESHVV (223 aa)). Cysteine 86 (nucleophile) is an active-site residue. Catalysis depends on residues histidine 194 and glutamate 196.

In terms of assembly, part of the FGAM synthase complex composed of 1 PurL, 1 PurQ and 2 PurS subunits.

It is found in the cytoplasm. The catalysed reaction is N(2)-formyl-N(1)-(5-phospho-beta-D-ribosyl)glycinamide + L-glutamine + ATP + H2O = 2-formamido-N(1)-(5-O-phospho-beta-D-ribosyl)acetamidine + L-glutamate + ADP + phosphate + H(+). The enzyme catalyses L-glutamine + H2O = L-glutamate + NH4(+). It participates in purine metabolism; IMP biosynthesis via de novo pathway; 5-amino-1-(5-phospho-D-ribosyl)imidazole from N(2)-formyl-N(1)-(5-phospho-D-ribosyl)glycinamide: step 1/2. In terms of biological role, part of the phosphoribosylformylglycinamidine synthase complex involved in the purines biosynthetic pathway. Catalyzes the ATP-dependent conversion of formylglycinamide ribonucleotide (FGAR) and glutamine to yield formylglycinamidine ribonucleotide (FGAM) and glutamate. The FGAM synthase complex is composed of three subunits. PurQ produces an ammonia molecule by converting glutamine to glutamate. PurL transfers the ammonia molecule to FGAR to form FGAM in an ATP-dependent manner. PurS interacts with PurQ and PurL and is thought to assist in the transfer of the ammonia molecule from PurQ to PurL. The polypeptide is Phosphoribosylformylglycinamidine synthase subunit PurQ (Halalkalibacterium halodurans (strain ATCC BAA-125 / DSM 18197 / FERM 7344 / JCM 9153 / C-125) (Bacillus halodurans)).